A 332-amino-acid chain; its full sequence is DNA-directed RNA polymerase subunit alpha (332 aa).

The segment at 2 to 234 (TVTANQVLRP…DQLSVFGDFT (233 aa)) is alpha N-terminal domain (alpha-NTD). The segment at 248-332 (VDPVLLRPID…AGVAQHGMLG (85 aa)) is alpha C-terminal domain (alpha-CTD).

It belongs to the RNA polymerase alpha chain family. As to quaternary structure, homodimer. The RNAP catalytic core consists of 2 alpha, 1 beta, 1 beta' and 1 omega subunit. When a sigma factor is associated with the core the holoenzyme is formed, which can initiate transcription.

The catalysed reaction is RNA(n) + a ribonucleoside 5'-triphosphate = RNA(n+1) + diphosphate. DNA-dependent RNA polymerase catalyzes the transcription of DNA into RNA using the four ribonucleoside triphosphates as substrates. The sequence is that of DNA-directed RNA polymerase subunit alpha from Xanthomonas axonopodis pv. citri (strain 306).